We begin with the raw amino-acid sequence, 151 residues long: RNA polymerase-binding transcription factor DksA (151 aa).

Zn(2+) is bound by residues cysteine 114, cysteine 117, cysteine 135, and cysteine 138. Residues 114-138 (CNSCSVEIGIRRLEARPTADLCIDC) form a dksA C4-type zinc finger.

The protein belongs to the DksA family. In terms of assembly, interacts directly with the RNA polymerase.

It localises to the cytoplasm. Functionally, transcription factor that acts by binding directly to the RNA polymerase (RNAP). Required for negative regulation of rRNA expression and positive regulation of several amino acid biosynthesis promoters. Also required for regulation of fis expression. The polypeptide is RNA polymerase-binding transcription factor DksA (Buchnera aphidicola subsp. Acyrthosiphon pisum (strain APS) (Acyrthosiphon pisum symbiotic bacterium)).